The following is an 87-amino-acid chain: U3-theraphotoxin-Hhn1a 16 (87 aa).

A signal peptide spans 1 to 24; that stretch reads MVNMKASMFLTFAGLVLLFVVCYA. The propeptide occupies 25–52; sequence SESEEKEFPKEMLSSIFAVDNDFKQGER. 3 disulfides stabilise this stretch: cysteine 54-cysteine 67, cysteine 61-cysteine 72, and cysteine 66-cysteine 79.

It belongs to the neurotoxin 10 (Hwtx-1) family. 51 (Hntx-8) subfamily. Hntx-8 sub-subfamily. As to expression, expressed by the venom gland.

The protein resides in the secreted. Its function is as follows. Ion channel inhibitor. This is U3-theraphotoxin-Hhn1a 16 from Cyriopagopus hainanus (Chinese bird spider).